A 441-amino-acid chain; its full sequence is Serine/threonine-protein kinase prk-2 (441 aa).

The Protein kinase domain maps to 31–285 (YKLKAELGRG…LEAILNHPWV (255 aa)). Residues 37-45 (LGRGGFGVV) and Lys60 contribute to the ATP site. The active-site Proton acceptor is Asp158. The interval 301–364 (QKKTSESSDD…NQKKPNHKEF (64 aa)) is disordered. Positions 303–320 (KTSESSDDHHSETLGDHS) are enriched in basic and acidic residues. Polar residues predominate over residues 328–338 (PPTSSVSQQPG).

The protein belongs to the protein kinase superfamily. Ser/Thr protein kinase family. PIM subfamily. Requires Mg(2+) as cofactor.

It carries out the reaction L-seryl-[protein] + ATP = O-phospho-L-seryl-[protein] + ADP + H(+). It catalyses the reaction L-threonyl-[protein] + ATP = O-phospho-L-threonyl-[protein] + ADP + H(+). Functionally, involved in the negative regulation of synaptic differentiation in PLM neurons. This is Serine/threonine-protein kinase prk-2 from Caenorhabditis elegans.